The primary structure comprises 98 residues: NADH-ubiquinone oxidoreductase chain 4L (98 aa).

A run of 3 helical transmembrane segments spans residues 1–21 (MSLI…GLLM), 29–49 (SLLC…MMVL), and 61–81 (IILL…LVMI).

It belongs to the complex I subunit 4L family. As to quaternary structure, core subunit of respiratory chain NADH dehydrogenase (Complex I) which is composed of 45 different subunits.

The protein localises to the mitochondrion inner membrane. The enzyme catalyses a ubiquinone + NADH + 5 H(+)(in) = a ubiquinol + NAD(+) + 4 H(+)(out). Core subunit of the mitochondrial membrane respiratory chain NADH dehydrogenase (Complex I) which catalyzes electron transfer from NADH through the respiratory chain, using ubiquinone as an electron acceptor. Part of the enzyme membrane arm which is embedded in the lipid bilayer and involved in proton translocation. The sequence is that of NADH-ubiquinone oxidoreductase chain 4L (MT-ND4L) from Ceratotherium simum (White rhinoceros).